Here is a 479-residue protein sequence, read N- to C-terminus: Glycogen synthase (479 aa).

An ADP-alpha-D-glucose-binding site is contributed by K15.

The protein belongs to the glycosyltransferase 1 family. Bacterial/plant glycogen synthase subfamily.

It carries out the reaction [(1-&gt;4)-alpha-D-glucosyl](n) + ADP-alpha-D-glucose = [(1-&gt;4)-alpha-D-glucosyl](n+1) + ADP + H(+). It participates in glycan biosynthesis; glycogen biosynthesis. In terms of biological role, synthesizes alpha-1,4-glucan chains using ADP-glucose. This is Glycogen synthase from Clostridium beijerinckii (strain ATCC 51743 / NCIMB 8052) (Clostridium acetobutylicum).